The following is a 430-amino-acid chain: Synaptotagmin-11 (430 aa).

Residues 1 to 15 lie on the Vesicular side of the membrane; that stretch reads MAEITNIRPSFDVSP. Residues 16 to 36 form a helical membrane-spanning segment; the sequence is VAAGLIGASVLVVCVSVTVFV. The Cytoplasmic portion of the chain corresponds to 37-430; that stretch reads WTCCHQQAEK…VAKWHSLSEY (394 aa). The disordered stretch occupies residues 132 to 154; that stretch reads RSPMTSLTPGESKPTSPSSPEED. Ser133 carries the phosphoserine modification. The segment covering 140–150 has biased composition (low complexity); that stretch reads PGESKPTSPSS. 2 C2 domains span residues 156 to 278 and 290 to 425; these read MLGS…QLTR and SRGE…AKWH. 3 residues coordinate Ca(2+): Asp249, Ser252, and Asp255.

Belongs to the synaptotagmin family. Homodimer. Can also form heterodimers. Interacts with PRKN. Interacts (via C2 2 domain) with AGO2 and SND1; the interaction with SND1 is direct. Interacts with KIF1A; the interaction increases in presence of calcium. It depends on Ca(2+) as a cofactor. Post-translationally, ubiquitinated, at least by PRKN, and targeted to the proteasome complex for degradation. Ubiquitination is inhibited by ATP13A2. In terms of tissue distribution, highly expressed in brain and at lower levels in other tissues.

Its subcellular location is the cytoplasmic vesicle membrane. It localises to the perikaryon. It is found in the golgi apparatus. The protein resides in the trans-Golgi network membrane. The protein localises to the recycling endosome membrane. Its subcellular location is the lysosome membrane. It localises to the cytoplasmic vesicle. It is found in the phagosome. The protein resides in the cell projection. The protein localises to the axon. Its subcellular location is the dendrite. It localises to the postsynaptic density. It is found in the clathrin-coated vesicle membrane. Functionally, synaptotagmin family member involved in vesicular and membrane trafficking which does not bind Ca(2+). Inhibits clathrin-mediated and bulk endocytosis in neurons, functions to ensure precision in vesicle retrieval. Plays an important role in dopamine transmission by regulating endocytosis and the vesicle-recycling process. Essential component of a neuronal vesicular trafficking pathway that differs from the synaptic vesicle trafficking pathway but is crucial for development and synaptic plasticity. In macrophages and microglia, inhibits the conventional cytokine secretion, of at least IL6 and TNF, and phagocytosis. In astrocytes, regulates lysosome exocytosis, mechanism required for the repair of injured astrocyte cell membrane. Required for the ATP13A2-mediated regulation of the autophagy-lysosome pathway. The sequence is that of Synaptotagmin-11 from Rattus norvegicus (Rat).